A 597-amino-acid polypeptide reads, in one-letter code: Protein Spindly (597 aa).

Met1 is subject to N-acetylmethionine. A coiled-coil region spans residues 1-445 (MEADITNLRN…LKLKYEPEER (445 aa)). Residues Ser508 and Ser547 each carry the phosphoserine modification. The tract at residues 531-597 (PASTEVLHEQ…STPEMQCPQQ (67 aa)) is disordered. Residues 540-549 (QSGNTPSSPR) show a composition bias toward polar residues. Residues 550 to 574 (LTEESRLPTKVKERKEATSKLEKGA) are compositionally biased toward basic and acidic residues. The span at 583–597 (YVSSKSTPEMQCPQQ) shows a compositional bias: polar residues.

This sequence belongs to the Spindly family. As to quaternary structure, interacts with KNTC1 and ZW10. These interactions appear weak and may be transient or indirect. Interacts with dynein intermediate chain and dynactin (DCTN1). Interacts with the catalytically active form of USP45. Monoubiquitinated with'Lys-48' linkage. Deubiquitinated by USP45.

It localises to the cytoplasm. The protein localises to the cytoskeleton. The protein resides in the microtubule organizing center. It is found in the centrosome. Its subcellular location is the chromosome. It localises to the centromere. The protein localises to the kinetochore. The protein resides in the nucleus. It is found in the spindle pole. Its function is as follows. Required for the localization of dynein and dynactin to the mitotic kintochore. Dynein is believed to control the initial lateral interaction between the kinetochore and spindle microtubules and to facilitate the subsequent formation of end-on kinetochore-microtubule attachments mediated by the NDC80 complex. Also required for correct spindle orientation. Does not appear to be required for the removal of spindle assembly checkpoint (SAC) proteins from the kinetochore upon bipolar spindle attachment. Acts as an adapter protein linking the dynein motor complex to various cargos and converts dynein from a non-processive to a highly processive motor in the presence of dynactin. Facilitates the interaction between dynein and dynactin and activates dynein processivity (the ability to move along a microtubule for a long distance without falling off the track). Plays a role in cell migration. This chain is Protein Spindly (Spdl1), found in Rattus norvegicus (Rat).